Here is a 421-residue protein sequence, read N- to C-terminus: Serine hydroxymethyltransferase (421 aa).

(6S)-5,6,7,8-tetrahydrofolate-binding positions include L121 and 125 to 127 (GHL). Position 229 is an N6-(pyridoxal phosphate)lysine (K229).

Belongs to the SHMT family. As to quaternary structure, homodimer. Requires pyridoxal 5'-phosphate as cofactor.

It localises to the cytoplasm. It carries out the reaction (6R)-5,10-methylene-5,6,7,8-tetrahydrofolate + glycine + H2O = (6S)-5,6,7,8-tetrahydrofolate + L-serine. The protein operates within one-carbon metabolism; tetrahydrofolate interconversion. Its pathway is amino-acid biosynthesis; glycine biosynthesis; glycine from L-serine: step 1/1. Functionally, catalyzes the reversible interconversion of serine and glycine with tetrahydrofolate (THF) serving as the one-carbon carrier. This reaction serves as the major source of one-carbon groups required for the biosynthesis of purines, thymidylate, methionine, and other important biomolecules. Also exhibits THF-independent aldolase activity toward beta-hydroxyamino acids, producing glycine and aldehydes, via a retro-aldol mechanism. This is Serine hydroxymethyltransferase from Haemophilus influenzae (strain ATCC 51907 / DSM 11121 / KW20 / Rd).